A 211-amino-acid polypeptide reads, in one-letter code: NADH-quinone oxidoreductase subunit I (211 aa).

Residues 1–27 (MANTDRPALPHKRAVPPSRADSGPRRR) are disordered. 2 consecutive 4Fe-4S ferredoxin-type domains span residues 71–101 (LNRY…VEGA) and 117–146 (RVYQ…MTYD). Positions 81, 84, 87, 91, 126, 129, 132, and 136 each coordinate [4Fe-4S] cluster.

Belongs to the complex I 23 kDa subunit family. NDH-1 is composed of 14 different subunits. Subunits NuoA, H, J, K, L, M, N constitute the membrane sector of the complex. [4Fe-4S] cluster serves as cofactor.

It localises to the cell membrane. The catalysed reaction is a quinone + NADH + 5 H(+)(in) = a quinol + NAD(+) + 4 H(+)(out). NDH-1 shuttles electrons from NADH, via FMN and iron-sulfur (Fe-S) centers, to quinones in the respiratory chain. The immediate electron acceptor for the enzyme in this species is believed to be menaquinone. Couples the redox reaction to proton translocation (for every two electrons transferred, four hydrogen ions are translocated across the cytoplasmic membrane), and thus conserves the redox energy in a proton gradient. This Mycobacterium bovis (strain ATCC BAA-935 / AF2122/97) protein is NADH-quinone oxidoreductase subunit I.